Reading from the N-terminus, the 317-residue chain is Aspartate carbamoyltransferase catalytic subunit (317 aa).

2 residues coordinate carbamoyl phosphate: Arg-66 and Thr-67. Position 94 (Lys-94) interacts with L-aspartate. Arg-116, His-144, and Gln-147 together coordinate carbamoyl phosphate. L-aspartate contacts are provided by Arg-177 and Arg-231. Positions 272 and 273 each coordinate carbamoyl phosphate.

Belongs to the aspartate/ornithine carbamoyltransferase superfamily. ATCase family. As to quaternary structure, heterododecamer (2C3:3R2) of six catalytic PyrB chains organized as two trimers (C3), and six regulatory PyrI chains organized as three dimers (R2).

It catalyses the reaction carbamoyl phosphate + L-aspartate = N-carbamoyl-L-aspartate + phosphate + H(+). It participates in pyrimidine metabolism; UMP biosynthesis via de novo pathway; (S)-dihydroorotate from bicarbonate: step 2/3. Catalyzes the condensation of carbamoyl phosphate and aspartate to form carbamoyl aspartate and inorganic phosphate, the committed step in the de novo pyrimidine nucleotide biosynthesis pathway. This is Aspartate carbamoyltransferase catalytic subunit from Nitrobacter winogradskyi (strain ATCC 25391 / DSM 10237 / CIP 104748 / NCIMB 11846 / Nb-255).